We begin with the raw amino-acid sequence, 686 residues long: Pentatricopeptide repeat-containing protein At4g08210 (686 aa).

PPR repeat units lie at residues 4–38 (DLKL…GISQ), 39–69 (NVFI…MSER), 70–104 (NIVT…EEEA), 106–140 (NEFM…NLRG), 141–171 (DVVL…ILRP), 172–206 (SSTS…NVVS), 207–236 (WNCL…GLVL), 237–271 (DGFA…GLES), 272–302 (SPFA…EKLA), 306–340 (SVAV…DLCF), 341–375 (DSYT…GYEL), 376–406 (DYIV…LPNK), 407–441 (DIIA…GLDA), 442–476 (DQFI…GYES), 477–507 (EPVT…MLER), 508–542 (DVVS…GIEP), 543–573 (NKVT…MKSE), and 579–609 (YLEH…MPLE). The segment at 614 to 686 (IWTSLLTACG…AKESGMSWII (73 aa)) is type E motif; degenerate.

The protein belongs to the PPR family. PCMP-E subfamily.

This chain is Pentatricopeptide repeat-containing protein At4g08210 (PCMP-E100), found in Arabidopsis thaliana (Mouse-ear cress).